The sequence spans 136 residues: uncharacterized protein (136 aa).

Residues M1–A19 form the signal peptide. Residues F75 to F97 traverse the membrane as a helical segment.

The protein resides in the membrane. This is an uncharacterized protein from Saccharomyces cerevisiae (strain ATCC 204508 / S288c) (Baker's yeast).